We begin with the raw amino-acid sequence, 370 residues long: Putative 8-amino-7-oxononanoate synthase (370 aa).

Arg-20 contributes to the substrate binding site. 95-96 is a pyridoxal 5'-phosphate binding site; it reads GY. His-120 contributes to the substrate binding site. Pyridoxal 5'-phosphate is bound by residues Ser-167, 192–195, and 223–226; these read DDAH and TLSK. Lys-226 carries the post-translational modification N6-(pyridoxal phosphate)lysine. Thr-337 lines the substrate pocket.

The protein belongs to the class-II pyridoxal-phosphate-dependent aminotransferase family. BioF subfamily. As to quaternary structure, homodimer. The cofactor is pyridoxal 5'-phosphate.

The enzyme catalyses 6-carboxyhexanoyl-[ACP] + L-alanine + H(+) = (8S)-8-amino-7-oxononanoate + holo-[ACP] + CO2. It functions in the pathway cofactor biosynthesis; biotin biosynthesis. Its function is as follows. Catalyzes the decarboxylative condensation of pimeloyl-[acyl-carrier protein] and L-alanine to produce 8-amino-7-oxononanoate (AON), [acyl-carrier protein], and carbon dioxide. The sequence is that of Putative 8-amino-7-oxononanoate synthase (bioF) from Methanococcus vannielii (strain ATCC 35089 / DSM 1224 / JCM 13029 / OCM 148 / SB).